Consider the following 486-residue polypeptide: MTAISNHVGTIVKLNPDYTQMDAVYLTNKLLNLIGDAALDLPGDADPLTNLDLMVKAAQENGKIPDSQAARQILEAQLMDLATPTPSRINQLFWDKYQAGPRVATDWFFALSRANNYIQTRAIAKNVVFPAKTEYGDLEITINLSKPEKDPKDIAAAAHAAQSGYPACALCLQTEGYAGRTDFAARTNHRIIRFLLGGKTWGFQYSPYAYFNEHAIFLDAIHEPMVIDQSTFSNLLAIVSMFPTYFVGSNADLPIVGGSMLTHEHYQGGRHTFPMAKAPIETQVEISGHPHVFAGIVKWPMSVIRLVSADSDELINAAEHVRQVWNQYTDETVDVRAFVDGKPHHTVTPIARRVGSEFQLDLVLRDNQTSAEHPDGIFHPHQDVQHIKKENIGLIEVMGRAILPARLKSELAEVQKYLLGEANTMKPMHKTWADQLKAKYDWTPENVEAQMQAAVGRVFARVLEDAGVFKRDEVGQKAFARFCRAL.

This sequence belongs to the galactose-1-phosphate uridylyltransferase type 2 family.

Its subcellular location is the cytoplasm. It carries out the reaction alpha-D-galactose 1-phosphate + UDP-alpha-D-glucose = alpha-D-glucose 1-phosphate + UDP-alpha-D-galactose. It functions in the pathway carbohydrate metabolism; galactose metabolism. This Lacticaseibacillus casei (strain BL23) (Lactobacillus casei) protein is Galactose-1-phosphate uridylyltransferase.